The chain runs to 101 residues: Small ribosomal subunit protein uS14 (101 aa).

Belongs to the universal ribosomal protein uS14 family. In terms of assembly, part of the 30S ribosomal subunit. Contacts proteins S3 and S10.

Its function is as follows. Binds 16S rRNA, required for the assembly of 30S particles and may also be responsible for determining the conformation of the 16S rRNA at the A site. This is Small ribosomal subunit protein uS14 from Chromohalobacter salexigens (strain ATCC BAA-138 / DSM 3043 / CIP 106854 / NCIMB 13768 / 1H11).